Here is a 590-residue protein sequence, read N- to C-terminus: Membrane protein insertase YidC (590 aa).

Helical transmembrane passes span 5-25, 368-388, 433-453, 483-503, and 519-539; these read SVIG…FMKP, GLII…LSLA, LGGC…FYVF, LPLY…TVFF, and IMMW…PAGL.

The protein belongs to the OXA1/ALB3/YidC family. Type 1 subfamily. As to quaternary structure, interacts with the Sec translocase complex via SecD. Specifically interacts with transmembrane segments of nascent integral membrane proteins during membrane integration.

The protein localises to the cell inner membrane. Functionally, required for the insertion and/or proper folding and/or complex formation of integral membrane proteins into the membrane. Involved in integration of membrane proteins that insert both dependently and independently of the Sec translocase complex, as well as at least some lipoproteins. Aids folding of multispanning membrane proteins. This is Membrane protein insertase YidC from Chlorobaculum tepidum (strain ATCC 49652 / DSM 12025 / NBRC 103806 / TLS) (Chlorobium tepidum).